We begin with the raw amino-acid sequence, 1098 residues long: Unconventional myosin-If (1098 aa).

Residues 17–690 form the Myosin motor domain; sequence SGVDDMVLLP…SLFLLEEVRE (674 aa). 110–117 is a binding site for ATP; that stretch reads GESGAGKT. The interval 579 to 589 is actin-binding; it reads PHYIRCIKPNE. The 30-residue stretch at 693–722 folds into the IQ domain; the sequence is FDGFARTIQKAWRRHVAVRKYEEMREEASN. In terms of domain architecture, TH1 spans 728 to 917; the sequence is KERRRNSINR…GRTLTVSVGD (190 aa). Disordered regions lie at residues 913 to 1009 and 1021 to 1044; these read VSVG…EFLN and KRSVGQRPVPGVGRPKPQPRTHGP. The segment covering 924–937 has biased composition (basic residues); the sequence is KPTRKGMAKGKPRR. Ser-1023 carries the post-translational modification Phosphoserine. The SH3 domain maps to 1041 to 1098; the sequence is THGPRCRALYQYVGQDVDELSFNVNEVIEILMEDPSGWWKGRLHGQEGLFPGNYVEKI.

The protein belongs to the TRAFAC class myosin-kinesin ATPase superfamily. Myosin family.

In terms of biological role, myosins are actin-based motor molecules with ATPase activity. Unconventional myosins serve in intracellular movements. Their highly divergent tails are presumed to bind to membranous compartments, which would be moved relative to actin filaments. This chain is Unconventional myosin-If (MYO1F), found in Homo sapiens (Human).